Here is a 281-residue protein sequence, read N- to C-terminus: Pantothenate synthetase (281 aa).

30–37 serves as a coordination point for ATP; it reads MGNLHQGH. The Proton donor role is filled by His37. Gln61 lines the (R)-pantoate pocket. Gln61 lines the beta-alanine pocket. 149–152 serves as a coordination point for ATP; sequence GNKD. Gln155 is a (R)-pantoate binding site. ATP-binding positions include Ile178 and 186 to 189; that span reads MSSR.

It belongs to the pantothenate synthetase family. As to quaternary structure, homodimer.

The protein localises to the cytoplasm. The enzyme catalyses (R)-pantoate + beta-alanine + ATP = (R)-pantothenate + AMP + diphosphate + H(+). Its pathway is cofactor biosynthesis; (R)-pantothenate biosynthesis; (R)-pantothenate from (R)-pantoate and beta-alanine: step 1/1. Its function is as follows. Catalyzes the condensation of pantoate with beta-alanine in an ATP-dependent reaction via a pantoyl-adenylate intermediate. This is Pantothenate synthetase from Shewanella baltica (strain OS195).